Consider the following 262-residue polypeptide: Hydroxyethylthiazole kinase (262 aa).

Met43 serves as a coordination point for substrate. 2 residues coordinate ATP: Arg118 and Thr164. Ala191 contacts substrate.

This sequence belongs to the Thz kinase family. Mg(2+) is required as a cofactor.

It carries out the reaction 5-(2-hydroxyethyl)-4-methylthiazole + ATP = 4-methyl-5-(2-phosphooxyethyl)-thiazole + ADP + H(+). The protein operates within cofactor biosynthesis; thiamine diphosphate biosynthesis; 4-methyl-5-(2-phosphoethyl)-thiazole from 5-(2-hydroxyethyl)-4-methylthiazole: step 1/1. Its function is as follows. Catalyzes the phosphorylation of the hydroxyl group of 4-methyl-5-beta-hydroxyethylthiazole (THZ). The sequence is that of Hydroxyethylthiazole kinase from Cereibacter sphaeroides (strain ATCC 17023 / DSM 158 / JCM 6121 / CCUG 31486 / LMG 2827 / NBRC 12203 / NCIMB 8253 / ATH 2.4.1.) (Rhodobacter sphaeroides).